The chain runs to 100 residues: Small ribosomal subunit protein uS14 (100 aa).

Belongs to the universal ribosomal protein uS14 family. As to quaternary structure, part of the 30S ribosomal subunit. Contacts proteins S3 and S10.

Binds 16S rRNA, required for the assembly of 30S particles and may also be responsible for determining the conformation of the 16S rRNA at the A site. The protein is Small ribosomal subunit protein uS14 of Synechococcus sp. (strain CC9902).